A 218-amino-acid polypeptide reads, in one-letter code: Transmembrane gamma-carboxyglutamic acid protein 1 (218 aa).

Residues 1-20 (MGRVFLTGEKANSILKRYPR) constitute a propeptide that is removed on maturation. In terms of domain architecture, Gla spans 21 to 66 (ANGFFEEIRQGNIERECKEEFCTFEEAREAFENNEKTKEFWSTYTK). Residues 21-83 (ANGFFEEIRQ…RGSDWFQFYL (63 aa)) are Extracellular-facing. An intrachain disulfide couples C37 to C42. Residues 84-106 (TFPLIFGLFIILLVIFLIWRCFL) traverse the membrane as a helical segment. Topologically, residues 107-218 (RNKTRRQTVT…PMVPVVTTIK (112 aa)) are cytoplasmic. Residues 161 to 195 (TRLSNCDPPPTYEEATGQVNLQRSETEPHLDPPPE) form a disordered region.

Gla residues are produced after subsequent post-translational modifications of glutamate by a vitamin K-dependent gamma-carboxylase. In terms of tissue distribution, highly expressed in the spinal cord.

The protein resides in the membrane. The sequence is that of Transmembrane gamma-carboxyglutamic acid protein 1 (PRRG1) from Homo sapiens (Human).